Reading from the N-terminus, the 264-residue chain is 1H-3-hydroxy-4-oxoquinoline 2,4-dioxygenase (264 aa).

Substrate-binding positions include 30–32 (WCQ), 94–95 (TS), and Trp153. The active-site Proton donor/acceptor is His244.

It belongs to the AB hydrolase superfamily. None. Contrary to most other dioxygenases, this enzyme does not require a cofactor for catalysis. is required as a cofactor.

It catalyses the reaction 3-hydroxy-1H-quinolin-4-one + O2 = N-formylanthranilate + CO + H(+). In terms of biological role, ring-cleaving dioxygenase involved in oxoquinoline degradation and utilization. This Pseudomonas putida (Arthrobacter siderocapsulatus) protein is 1H-3-hydroxy-4-oxoquinoline 2,4-dioxygenase (qdo).